The following is a 457-amino-acid chain: Prenyltransferase ucdE (457 aa).

Arg106, Lys198, Lys277, Tyr279, Tyr382, Tyr447, and Tyr451 together coordinate dimethylallyl diphosphate.

This sequence belongs to the tryptophan dimethylallyltransferase family.

It participates in secondary metabolite biosynthesis. Functionally, nonribosomal peptide synthetase that mediates the biosynthesis of usterphenyllins and uscandidusins, p-terphenyl derivatives. Within the pathway, ucdE prenylates position C-5 of ring A of 3,15-dihydroxyterphenyllin to produce forms usterphenyllin B. UcdE further prenylates position C-14 of ring C of usterphenyllin B to form usterphenyllin A. The pathway begin with the biosynthesis of 4-hydroxyphenylpyruvate (HPPA) from L-tyrosine, possibly by the aminotransferase ucdG. The nonribosomal peptide synthetase ucdA then condenses two HPPA units to produce atromentin. The key step in this pathway is the reduction and dehydration of atromentin to form a terphenyl triol intermediate, performed by the NAD-dependent dehydrogenase ucdB. Further O-methylation by the methyltransferase ucdC forms terphenyllin carrying two methoxy moieties at C-9 and C-12, and subsequent dihydroxylation at C-3 of ring A and C-15 of ring C by the flavin-dependent oxygenase ucdD leads to 3,15-dihydroxyterphenyllin. Prenylation by ucdE at position C-5 of ring A forms usterphenyllin B, and is followed by a second prenylation at position C-14 of ring C to form usterphenyllin A. The following furan ring formation that leads to uscandidusins A and B was proven to be an unexpected spontaneous non-enzymatic reaction. This is Prenyltransferase ucdE from Aspergillus ustus.